A 354-amino-acid chain; its full sequence is Hyaluronan and proteoglycan link protein 1 (354 aa).

Residues 1–15 (MKSLLLLVLISICWA) constitute a propeptide that is removed on maturation. 2 N-linked (GlcNAc...) asparagine glycosylation sites follow: Asn21 and Asn56. Positions 38–152 (PHLLVEAEQA…EGLEDDTVVV (115 aa)) constitute an Ig-like V-type domain. Disulfide bonds link Cys61–Cys139, Cys181–Cys252, Cys205–Cys226, Cys279–Cys349, and Cys304–Cys325. Link domains lie at 159 to 254 (VVFP…FCFT) and 259 to 351 (GRFY…YCFR).

This sequence belongs to the HAPLN family. Widely expressed. Weakly expressed in the brain.

Its subcellular location is the secreted. It is found in the extracellular space. The protein resides in the extracellular matrix. Its function is as follows. Stabilizes the aggregates of proteoglycan monomers with hyaluronic acid in the extracellular cartilage matrix. This chain is Hyaluronan and proteoglycan link protein 1 (HAPLN1), found in Homo sapiens (Human).